A 233-amino-acid chain; its full sequence is Pre-hexon-linking protein VIII (233 aa).

T64 carries the phosphothreonine; by host modification. Residues A112–S163 constitute a propeptide that is removed on maturation. Residue S180 is modified to Phosphoserine; by host.

It belongs to the adenoviridae hexon-linking protein family. In terms of assembly, interacts with the peripentonal hexons as well as the hexons in the facets. Part of a complex composed of the core-capsid bridging protein, the endosome lysis protein VI and the hexon-linking protein VIII; these interactions bridge the virus core to the capsid. Cleaved by the viral protease during virion maturation. May cause the middle segment to be shed from the capsid.

Its subcellular location is the virion. It is found in the host nucleus. Its function is as follows. Structural component of the virion that acts as a cement protein on the capsid interior and which glue the peripentonal hexons and group-of-nine hexons together. The chain is Pre-hexon-linking protein VIII from Homo sapiens (Human).